The primary structure comprises 235 residues: Octanoyltransferase (235 aa).

The region spanning 59–235 (PGSSQAVWLL…KKSLTERFGL (177 aa)) is the BPL/LPL catalytic domain. Substrate is bound by residues 101–108 (RGGEVTHH), 168–170 (SIG), and 181–183 (GLS). Catalysis depends on Cys-199, which acts as the Acyl-thioester intermediate.

The protein belongs to the LipB family.

It localises to the cytoplasm. The enzyme catalyses octanoyl-[ACP] + L-lysyl-[protein] = N(6)-octanoyl-L-lysyl-[protein] + holo-[ACP] + H(+). It participates in protein modification; protein lipoylation via endogenous pathway; protein N(6)-(lipoyl)lysine from octanoyl-[acyl-carrier-protein]: step 1/2. Its function is as follows. Catalyzes the transfer of endogenously produced octanoic acid from octanoyl-acyl-carrier-protein onto the lipoyl domains of lipoate-dependent enzymes. Lipoyl-ACP can also act as a substrate although octanoyl-ACP is likely to be the physiological substrate. The sequence is that of Octanoyltransferase from Prochlorococcus marinus (strain MIT 9211).